We begin with the raw amino-acid sequence, 579 residues long: Glutamine--tRNA ligase (579 aa).

Positions 41–51 (PEPNGYLHIGH) match the 'HIGH' region motif. ATP-binding positions include 42–44 (EPN) and 48–54 (HIGHAKA). Aspartate 74 and tyrosine 218 together coordinate L-glutamine. ATP is bound by residues threonine 237, 285-286 (RL), and 293-295 (MSK). The 'KMSKS' region signature appears at 292–296 (VMSKR).

Belongs to the class-I aminoacyl-tRNA synthetase family. Monomer.

It localises to the cytoplasm. The enzyme catalyses tRNA(Gln) + L-glutamine + ATP = L-glutaminyl-tRNA(Gln) + AMP + diphosphate. The chain is Glutamine--tRNA ligase from Xanthomonas campestris pv. campestris (strain 8004).